A 257-amino-acid polypeptide reads, in one-letter code: Chymotrypsin-like protease VLCTLP (257 aa).

The N-terminal stretch at 1–18 is a signal peptide; it reads MVLIRVLANLLLLQLSYA. A propeptide spanning residues 19–24 is cleaved from the precursor; that stretch reads QKSSEL. The region spanning 25 to 248 is the Peptidase S1 domain; sequence VVGGDECNIN…YSDWIQSIIA (224 aa). 6 disulfide bridges follow: C31-C162, C49-C65, C97-C255, C141-C209, C173-C188, and C199-C224. The N-linked (GlcNAc...) asparagine glycan is linked to N44. The active-site Charge relay system is H64. N100 carries an N-linked (GlcNAc...) asparagine glycan. D109 (charge relay system) is an active-site residue. 2 N-linked (GlcNAc...) asparagine glycosylation sites follow: N116 and N153. Residue S203 is the Charge relay system of the active site. N-linked (GlcNAc...) asparagine glycosylation occurs at N250.

The protein belongs to the peptidase S1 family. Snake venom subfamily. In terms of assembly, monomer. Post-translationally, partial deglycosylation has not effect on enzyme activity. Expressed by the venom gland.

It localises to the secreted. Inhibited by PMSF. Snake venom serine protease with tyrosine-specific chymotrypsin-like activity. Hydrolyzes the N-acetyl-L-tyrosine ethyl ester (ATEE). Has weak fibrinogenolytic activity. Weakly hydrolyzes azocasein, Aalpha-chain (FGA) and more slowly Bbeta-chain (FGB) of fibrinogen. Optimal substrates are angiotensins I and II (AGT). The protein is Chymotrypsin-like protease VLCTLP of Macrovipera lebetinus (Levantine viper).